A 290-amino-acid chain; its full sequence is 4-hydroxybenzoate octaprenyltransferase (290 aa).

6 consecutive transmembrane segments (helical) span residues 38 to 58 (LAGMAIPALGTLTVFILGVFF), 99 to 119 (LFGALVGISFALVLTLNSMTI), 141 to 161 (LPQLVLGAAFGWSIPMVFTAV), 213 to 233 (LIIGLLQLATLLLLGVIGWQL), 238 to 258 (IYYLALAGAAGLFLWQQKLIV), and 268 to 288 (AFLNNNLVGMLIFVGILLSLL).

Belongs to the UbiA prenyltransferase family. Mg(2+) is required as a cofactor.

The protein resides in the cell inner membrane. The catalysed reaction is all-trans-octaprenyl diphosphate + 4-hydroxybenzoate = 4-hydroxy-3-(all-trans-octaprenyl)benzoate + diphosphate. The protein operates within cofactor biosynthesis; ubiquinone biosynthesis. Functionally, catalyzes the prenylation of para-hydroxybenzoate (PHB) with an all-trans polyprenyl group. Mediates the second step in the final reaction sequence of ubiquinone-8 (UQ-8) biosynthesis, which is the condensation of the polyisoprenoid side chain with PHB, generating the first membrane-bound Q intermediate 3-octaprenyl-4-hydroxybenzoate. This chain is 4-hydroxybenzoate octaprenyltransferase, found in Sodalis glossinidius (strain morsitans).